Here is a 339-residue protein sequence, read N- to C-terminus: 3-isopropylmalate dehydrogenase (339 aa).

Substrate is bound by residues arginine 87, arginine 97, arginine 124, and aspartate 214. Mg(2+) is bound by residues aspartate 214, aspartate 238, and aspartate 242. Position 274–286 (274–286 (GSAPDIAGQGIAD)) interacts with NAD(+).

It belongs to the isocitrate and isopropylmalate dehydrogenases family. LeuB type 2 subfamily. Homodimer. It depends on Mg(2+) as a cofactor. Mn(2+) is required as a cofactor.

It localises to the cytoplasm. The enzyme catalyses (2R,3S)-3-isopropylmalate + NAD(+) = 4-methyl-2-oxopentanoate + CO2 + NADH. It participates in amino-acid biosynthesis; L-leucine biosynthesis; L-leucine from 3-methyl-2-oxobutanoate: step 3/4. In terms of biological role, catalyzes the oxidation of 3-carboxy-2-hydroxy-4-methylpentanoate (3-isopropylmalate) to 3-carboxy-4-methyl-2-oxopentanoate. The product decarboxylates to 4-methyl-2 oxopentanoate. The chain is 3-isopropylmalate dehydrogenase from Mycobacterium ulcerans (strain Agy99).